The primary structure comprises 541 residues: Cytochrome bc1 complex cytochrome b subunit (541 aa).

Residues 36-56 (FLLGEIALYSFIILILTGVYL) form a helical membrane-spanning segment. His-105 and His-119 together coordinate heme. A run of 3 helical transmembrane segments spans residues 109–129 (ALMF…TGAF), 137–157 (WVIG…GYSL), and 169–189 (IMSA…WMIF). 2 residues coordinate heme: His-206 and His-221. Transmembrane regions (helical) follow at residues 207 to 227 (VLII…LVWY), 256 to 276 (SVAF…VTTI), 325 to 345 (VFWV…YPWI), 371 to 391 (LGVM…NDIW), and 408 to 428 (IGLI…CIGL).

Belongs to the cytochrome b family. The cytochrome bc1 complex is composed of a cytochrome b (QcrB), the Rieske protein iron-sulfur (QcrA) and a diheme cytochrome c (QcrC) subunit. The cofactor is heme.

The protein resides in the cell membrane. It carries out the reaction a quinol + 2 Fe(III)-[cytochrome c](out) = a quinone + 2 Fe(II)-[cytochrome c](out) + 2 H(+)(out). In terms of biological role, cytochrome b subunit of the cytochrome bc1 complex, an essential component of the respiratory electron transport chain required for ATP synthesis. The bc1 complex catalyzes the oxidation of menaquinol and the reduction of cytochrome c in the respiratory chain. The bc1 complex operates through a Q-cycle mechanism that couples electron transfer to generation of the proton gradient that drives ATP synthesis. The chain is Cytochrome bc1 complex cytochrome b subunit (qcrB) from Corynebacterium efficiens (strain DSM 44549 / YS-314 / AJ 12310 / JCM 11189 / NBRC 100395).